The chain runs to 361 residues: GTPase Obg (361 aa).

The 159-residue stretch at 1–159 (MKFVDEAFID…KNLKLELKVL (159 aa)) folds into the Obg domain. The OBG-type G domain occupies 160–334 (ADVGLLGMPN…LIKTIYQHVK (175 aa)). GTP is bound by residues 166–173 (GMPNAGKS), 191–195 (FTTLH), 213–216 (DLPG), 284–287 (NKLD), and 315–317 (SAL). Residues S173 and T193 each contribute to the Mg(2+) site. Residues 339–361 (SEQPVEEVDPRFVPLPPESPETP) form a disordered region. The segment covering 351 to 361 (VPLPPESPETP) has biased composition (pro residues).

Belongs to the TRAFAC class OBG-HflX-like GTPase superfamily. OBG GTPase family. As to quaternary structure, monomer. Requires Mg(2+) as cofactor.

The protein resides in the cytoplasm. Functionally, an essential GTPase which binds GTP, GDP and possibly (p)ppGpp with moderate affinity, with high nucleotide exchange rates and a fairly low GTP hydrolysis rate. Plays a role in control of the cell cycle, stress response, ribosome biogenesis and in those bacteria that undergo differentiation, in morphogenesis control. This is GTPase Obg from Polaromonas sp. (strain JS666 / ATCC BAA-500).